The sequence spans 434 residues: Tyrosine-protein phosphatase non-receptor type 1 (434 aa).

In terms of domain architecture, Tyrosine-protein phosphatase spans 3 to 277 (IEKEFHRLDQ…RFSYLAVIEG (275 aa)). Residue S50 is modified to Phosphoserine. Substrate is bound by residues D181, 215–221 (CSAGIGR), and Q262. Catalysis depends on C215, which acts as the Phosphocysteine intermediate. Residues 291 to 319 (WKELSNEDLDPPPEHTPPPPRPPKRTSEM) are disordered.

The protein belongs to the protein-tyrosine phosphatase family. Non-receptor class 1 subfamily. In terms of assembly, interacts with EPHA3 (phosphorylated); dephosphorylates EPHA3 and may regulate its trafficking and function. Interacts with MET. Interacts with NCK1. Phosphorylated on serine and threonine residues near the N-terminus by casein kinase II (CK2).

The protein resides in the endoplasmic reticulum membrane. The enzyme catalyses O-phospho-L-tyrosyl-[protein] + H2O = L-tyrosyl-[protein] + phosphate. Functionally, may play an important role in CKII- and p60c-src-induced signal transduction cascades. May regulate the EFNA5-EPHA3 signaling pathway which modulates cell reorganization and cell-cell repulsion. May also regulate the hepatocyte growth factor receptor signaling pathway through dephosphorylation of MET. This is Tyrosine-protein phosphatase non-receptor type 1 (PTPN1) from Gallus gallus (Chicken).